The following is a 673-amino-acid chain: L-type lectin-domain containing receptor kinase SIT2 (673 aa).

An N-terminal signal peptide occupies residues 1 to 27 (MVLPKPEMPFFVLLLFLGLGCLRPAAA). Residues 28–296 (TDERFVFNGF…FPKPRSKTLE (269 aa)) are Extracellular-facing. The interval 32-270 (FVFNGFTGAN…VLGWSFKMNG (239 aa)) is legume-lectin like. N-linked (GlcNAc...) asparagine glycosylation is found at Asn41, Asn60, Asn82, Asn118, Asn138, Asn191, Asn214, Asn235, and Asn276. Residues 297–317 (IVLPIASAVLVFAVAAAVFVF) form a helical membrane-spanning segment. The Cytoplasmic segment spans residues 318–673 (MRRRRMFSEL…GTFSDLSGGR (356 aa)). Residues 352-631 (FSDKRLLGIG…LEGDVPLPEL (280 aa)) form the Protein kinase domain. Residues 358 to 366 (LGIGGFGRV) and Lys381 each bind ATP. The Proton acceptor role is filled by Asp477.

In the C-terminal section; belongs to the protein kinase superfamily. Ser/Thr protein kinase family. It in the N-terminal section; belongs to the leguminous lectin family. Mainly expressed in root epidermal cells.

Its subcellular location is the cell membrane. It carries out the reaction L-seryl-[protein] + ATP = O-phospho-L-seryl-[protein] + ADP + H(+). It catalyses the reaction L-threonyl-[protein] + ATP = O-phospho-L-threonyl-[protein] + ADP + H(+). Lectin-domain containing receptor kinase involved in salt stress response. Acts as a negative regulator of salt tolerance. This chain is L-type lectin-domain containing receptor kinase SIT2, found in Oryza sativa subsp. japonica (Rice).